A 288-amino-acid chain; its full sequence is Oxaloacetate decarboxylase (288 aa).

Ser-47 lines the substrate pocket. Asp-85 serves as a coordination point for Mg(2+). Residues Arg-156 and His-232 each contribute to the substrate site.

It belongs to the isocitrate lyase/PEP mutase superfamily. Oxaloacetate decarboxylase family. In terms of assembly, homotetramer; dimer of dimers. Mg(2+) serves as cofactor.

The enzyme catalyses oxaloacetate + H(+) = pyruvate + CO2. In terms of biological role, catalyzes the decarboxylation of oxaloacetate into pyruvate. Seems to play a role in maintaining cellular concentrations of bicarbonate and pyruvate. In Rhodopseudomonas palustris (strain TIE-1), this protein is Oxaloacetate decarboxylase.